Here is a 255-residue protein sequence, read N- to C-terminus: Protein SCO2 homolog, mitochondrial (255 aa).

A mitochondrion-targeting transit peptide spans 1–41 (MLLALGPKAWPKLSQFKPLLRISGGETLHRNSRHWAGQGQR). The Mitochondrial matrix segment spans residues 42-49 (QGPGLRTR). The chain crosses the membrane as a helical span at residues 50 to 67 (LLITALFGAGLGWAWLAA). The Mitochondrial intermembrane segment spans residues 68-255 (RAEKEQWRQQ…HIAAFHSVLP (188 aa)). Positions 74–248 (WRQQQRTEAL…IVESIRRHIA (175 aa)) constitute a Thioredoxin domain. Residues Cys-122, Cys-126, and His-213 each contribute to the Cu cation site. A disulfide bridge connects residues Cys-122 and Cys-126.

This sequence belongs to the SCO1/2 family. As to quaternary structure, homodimer. Interacts with COA6. Found in a complex with TMEM177, COX20, COA6, MT-CO2/COX2, COX18 and SCO1. Interacts with TMEM177 in a COX20-dependent manner. Interacts with COX20 in a MT-CO2/COX2- and COX18-dependent manner. Interacts with COX16. As to expression, expressed in retina, retinal pigment epithelium, and sclera.

It localises to the mitochondrion inner membrane. Functionally, copper metallochaperone essential for the synthesis and maturation of cytochrome c oxidase subunit II (MT-CO2/COX2) by facilitating the incorporation of copper into the Cu(A) site of MT-CO2/COX2. Could also act as a thiol-disulfide oxidoreductase to regulate the redox state of the cysteines in SCO1 during maturation of MT-CO2/COX2. This is Protein SCO2 homolog, mitochondrial (Sco2) from Mus musculus (Mouse).